The following is a 340-amino-acid chain: N-acetyl-gamma-glutamyl-phosphate reductase (340 aa).

Residue C146 is part of the active site.

This sequence belongs to the NAGSA dehydrogenase family. Type 1 subfamily.

It localises to the cytoplasm. It carries out the reaction N-acetyl-L-glutamate 5-semialdehyde + phosphate + NADP(+) = N-acetyl-L-glutamyl 5-phosphate + NADPH + H(+). It participates in amino-acid biosynthesis; L-arginine biosynthesis; N(2)-acetyl-L-ornithine from L-glutamate: step 3/4. In terms of biological role, catalyzes the NADPH-dependent reduction of N-acetyl-5-glutamyl phosphate to yield N-acetyl-L-glutamate 5-semialdehyde. This is N-acetyl-gamma-glutamyl-phosphate reductase from Streptococcus thermophilus (strain CNRZ 1066).